Here is a 444-residue protein sequence, read N- to C-terminus: Homocysteine/cysteine synthase (444 aa).

Ser-44 is subject to Phosphoserine. Lys-160 participates in a covalent cross-link: Glycyl lysine isopeptide (Lys-Gly) (interchain with G-Cter in ubiquitin). Lys-209 bears the N6-(pyridoxal phosphate)lysine mark.

It belongs to the trans-sulfuration enzymes family. As to quaternary structure, homotetramer. Pyridoxal 5'-phosphate serves as cofactor.

The protein localises to the cytoplasm. It carries out the reaction O-acetyl-L-homoserine + methanethiol = L-methionine + acetate + H(+). It catalyses the reaction O-acetyl-L-homoserine + hydrogen sulfide = L-homocysteine + acetate. The catalysed reaction is O-acetyl-L-serine + hydrogen sulfide = L-cysteine + acetate. It functions in the pathway amino-acid biosynthesis; L-methionine biosynthesis via de novo pathway; L-homocysteine from O-acetyl-L-homoserine. Functionally, catalyzes the conversion of O-acetyl-L-homoserine (OAH) into homocysteine in the methionine biosynthesis pathway. Required to efficiently reduce toxic levels of hydrogen sulfide generated when the sulfate assimilation pathway (SAP) is active. Also catalyzes the conversion of O-acetylserine (OAS) into cysteine, the last step in the cysteine biosynthesis pathway. However, it seems that in S.cerevisiae cysteine biosynthesis occurs exclusively through the cystathionine pathway and not via direct incorporation of sulfur into OAS. It therefore has no metabolic role in cysteine biosynthesis and may only have a regulatory role controlling OAS levels. This chain is Homocysteine/cysteine synthase, found in Saccharomyces cerevisiae (strain ATCC 204508 / S288c) (Baker's yeast).